The primary structure comprises 613 residues: MIPLRSKVTTVGRNAAGARALWRATGTKENEFGKPIVAIVNSYTQFVPGHVHLKNVGDIVADAVRKAGGVPKEFNTIAVDDGIAMGHGGMLYSLPSREIIADSVEYMVNAHTADAMVCISNCDKITPGMLNAAMRLNIPVVFVSGGPMEAGKAVVVDGVAHAPTDLITAISASASDAVDDAGLAAVEASACPTCGSCSGMFTANSMNCLTEALGLSLPGNGSTLATHAARRALFEKAGETVVELCRRYYGEEDESVLPRGIATKKAFENAMALDMAMGGSTNTILHILAAAQEGEVDFDLADIDELSKNVPCLSKVAPNSDYHMEDVHRAGGIPALLGELNRGGLLNKDVHSVHSNDLEGWLDDWDIRSGKTTEVATELFHAAPGGIRTTEAFSTENRWDELDTDAAKGCIRDVEHAYTADGGLVVLRGNISPDGAVIKSAGIEEELWNFTGPARVVESQEEAVSVILTKTIQAGEVLVVRYEGPSGGPGMQEMLHPTAFLKGSGLGKKCALITDGRFSGGSSGLSIGHVSPEAAHGGVIGLIENGDIVSIDVHNRKLEVQVSNEELQRRRDAMNASEKPWQPVNRNRVVTKALRAYAKMATSADKGAVRQVD.

Asp-81 contributes to the Mg(2+) binding site. Cys-122 contacts [2Fe-2S] cluster. Positions 123 and 124 each coordinate Mg(2+). Lys-124 is modified (N6-carboxylysine). Position 197 (Cys-197) interacts with [2Fe-2S] cluster. Position 493 (Glu-493) interacts with Mg(2+). Ser-519 serves as the catalytic Proton acceptor.

It belongs to the IlvD/Edd family. Homodimer. Requires [2Fe-2S] cluster as cofactor. Mg(2+) serves as cofactor.

It carries out the reaction (2R)-2,3-dihydroxy-3-methylbutanoate = 3-methyl-2-oxobutanoate + H2O. It catalyses the reaction (2R,3R)-2,3-dihydroxy-3-methylpentanoate = (S)-3-methyl-2-oxopentanoate + H2O. The protein operates within amino-acid biosynthesis; L-isoleucine biosynthesis; L-isoleucine from 2-oxobutanoate: step 3/4. It participates in amino-acid biosynthesis; L-valine biosynthesis; L-valine from pyruvate: step 3/4. Functions in the biosynthesis of branched-chain amino acids. Catalyzes the dehydration of (2R,3R)-2,3-dihydroxy-3-methylpentanoate (2,3-dihydroxy-3-methylvalerate) into 2-oxo-3-methylpentanoate (2-oxo-3-methylvalerate) and of (2R)-2,3-dihydroxy-3-methylbutanoate (2,3-dihydroxyisovalerate) into 2-oxo-3-methylbutanoate (2-oxoisovalerate), the penultimate precursor to L-isoleucine and L-valine, respectively. The protein is Dihydroxy-acid dehydratase of Corynebacterium glutamicum (strain R).